The chain runs to 321 residues: Protein ABIL3 (321 aa).

Disordered stretches follow at residues 179-273 and 279-298; these read TIRE…RSAS and EKEA…SKRL. Low complexity-rich tracts occupy residues 204–215 and 240–255; these read SATFSFSSIATA and IRPS…SKSR. The span at 279–288 shows a compositional bias: basic and acidic residues; sequence EKEAQKEPEH.

Belongs to the ABI family. In terms of assembly, binds SCAR.

The protein localises to the cytoplasm. It is found in the cytoskeleton. In terms of biological role, involved in regulation of actin and microtubule organization. Part of a WAVE complex that activates the Arp2/3 complex. In Arabidopsis thaliana (Mouse-ear cress), this protein is Protein ABIL3 (ABIL3).